We begin with the raw amino-acid sequence, 75 residues long: U6-lycotoxin-Ls1d (75 aa).

Positions 1–21 (MKLLFFTALVLVVISLIEVEA) are cleaved as a signal peptide. Positions 22–25 (ENER) are excised as a propeptide.

It belongs to the neurotoxin 19 (CSTX) family. 06 (U6-Lctx) subfamily. In terms of processing, contains 4 disulfide bonds. In terms of tissue distribution, expressed by the venom gland.

Its subcellular location is the secreted. This Lycosa singoriensis (Wolf spider) protein is U6-lycotoxin-Ls1d.